The sequence spans 195 residues: Glycerol-3-phosphate acyltransferase (195 aa).

5 consecutive transmembrane segments (helical) span residues 3 to 23, 52 to 72, 80 to 100, 113 to 133, and 147 to 167; these read FQVVIFILCYFIGSIPFGFIL, LALLTLLLDALKSFICVAIAQ, ILFLAALFAIIGHMFPVYLFF, LIFIDYKVALCFLTFWIICFL, and LIALLFICTYYTIVQSVIFAI.

The protein belongs to the PlsY family. In terms of assembly, probably interacts with PlsX.

It is found in the cell inner membrane. The catalysed reaction is an acyl phosphate + sn-glycerol 3-phosphate = a 1-acyl-sn-glycero-3-phosphate + phosphate. It participates in lipid metabolism; phospholipid metabolism. Its function is as follows. Catalyzes the transfer of an acyl group from acyl-phosphate (acyl-PO(4)) to glycerol-3-phosphate (G3P) to form lysophosphatidic acid (LPA). This enzyme utilizes acyl-phosphate as fatty acyl donor, but not acyl-CoA or acyl-ACP. The polypeptide is Glycerol-3-phosphate acyltransferase (Ehrlichia ruminantium (strain Gardel)).